The sequence spans 174 residues: Inactive protein RESTRICTED TEV MOVEMENT 1 (174 aa).

Residues 1-152 enclose the Jacalin-type lectin domain; it reads MKIGPVGKHD…LQYIGVYLRP (152 aa).

The protein belongs to the jacalin lectin family. In terms of assembly, self-interacts. Interacts with RTM3.

It is found in the cytoplasm. Functionally, unable to mediate restriction of long-distance movement of the pathogenic tobacco etch virus (TEV) without causing a hypersensitive response or inducing systemic acquired resistance. The sequence is that of Inactive protein RESTRICTED TEV MOVEMENT 1 (RTM1) from Arabidopsis thaliana (Mouse-ear cress).